Here is a 322-residue protein sequence, read N- to C-terminus: Hydrolase C26A3.11 (322 aa).

One can recognise a CN hydrolase domain in the interval 44–290 (FRIGLVQLAN…PSIVYADIDP (247 aa)). The active-site Proton acceptor is Glu-83. Lys-154 functions as the Proton donor in the catalytic mechanism. The Nucleophile role is filled by Cys-195.

This sequence belongs to the carbon-nitrogen hydrolase superfamily. NIT1/NIT2 family.

The chain is Hydrolase C26A3.11 from Schizosaccharomyces pombe (strain 972 / ATCC 24843) (Fission yeast).